A 93-amino-acid chain; its full sequence is MKYCVVILALLVALVCITESRSTETGYAVAETLEDNDLDELQAYLEEIAEASEMEDFSNIEEARGFFGKMKEYFKKFGASFKRRFANLKKRLG.

The first 22 residues, 1 to 22, serve as a signal peptide directing secretion; sequence MKYCVVILALLVALVCITESRS. The propeptide occupies 23-64; the sequence is TETGYAVAETLEDNDLDELQAYLEEIAEASEMEDFSNIEEAR. The short motif at 61–64 is the Processing quadruplet motif element; sequence EEAR. Leu92 is subject to Leucine amide.

In terms of processing, cleavage of the propeptide depends on the processing quadruplet motif (XXXR, with at least one of X being E). As to expression, expressed by the venom gland.

It localises to the secreted. Functionally, has antimicrobial activity against. Gram-positive bacteria (A.globiformis VKM Ac-1112 (MIC=1.1 uM), and B.subtilis VKM B-501 (MIC=0.6 uM)), Gram-negative bacteria (E.coli DH5-alpha (MIC=0.6 uM), E.coli MH1 (MIC=0.6 uM), and P.aeruginosa PAO1 (MIC=18 uM)), and yeasts (P.pastoris GS115 (MIC&gt;37 uM), and S.cerevisiae Y190 (MIC&gt;37 uM)). Also has a moderate hemolytic activity against rabbit erythrocytes. Causes paralysis, but is not lethal when injected into insect (M.domestica) larvae. The polypeptide is M-zodatoxin-Lt5a (Lachesana tarabaevi (Spider)).